Here is a 213-residue protein sequence, read N- to C-terminus: Kynurenine formamidase (213 aa).

W18 contributes to the substrate binding site. Zn(2+) contacts are provided by H48, H52, and D54. H58 serves as the catalytic Proton donor/acceptor. H160 and E172 together coordinate Zn(2+).

It belongs to the Cyclase 1 superfamily. KynB family. Homodimer. The cofactor is Zn(2+).

The enzyme catalyses N-formyl-L-kynurenine + H2O = L-kynurenine + formate + H(+). It functions in the pathway amino-acid degradation; L-tryptophan degradation via kynurenine pathway; L-kynurenine from L-tryptophan: step 2/2. Its function is as follows. Catalyzes the hydrolysis of N-formyl-L-kynurenine to L-kynurenine, the second step in the kynurenine pathway of tryptophan degradation. In Burkholderia cenocepacia (strain HI2424), this protein is Kynurenine formamidase.